Here is a 124-residue protein sequence, read N- to C-terminus: Fluoride-specific ion channel FluC (124 aa).

4 helical membrane passes run leucine 6 to valine 26, leucine 37 to alanine 57, threonine 69 to valine 89, and glycine 92 to valine 112. The Na(+) site is built by glycine 73 and threonine 76.

The protein belongs to the fluoride channel Fluc/FEX (TC 1.A.43) family.

The protein resides in the cell membrane. It catalyses the reaction fluoride(in) = fluoride(out). Its activity is regulated as follows. Na(+) is not transported, but it plays an essential structural role and its presence is essential for fluoride channel function. Fluoride-specific ion channel. Important for reducing fluoride concentration in the cell, thus reducing its toxicity. This chain is Fluoride-specific ion channel FluC, found in Methanocaldococcus jannaschii (strain ATCC 43067 / DSM 2661 / JAL-1 / JCM 10045 / NBRC 100440) (Methanococcus jannaschii).